Consider the following 67-residue polypeptide: Large ribosomal subunit protein uL29 (67 aa).

This sequence belongs to the universal ribosomal protein uL29 family.

This chain is Large ribosomal subunit protein uL29, found in Halorhodospira halophila (strain DSM 244 / SL1) (Ectothiorhodospira halophila (strain DSM 244 / SL1)).